A 436-amino-acid chain; its full sequence is 3-ketoacyl-CoA thiolase (436 aa).

The active-site Acyl-thioester intermediate is the Cys-99. Residues His-392 and Cys-422 each act as proton acceptor in the active site.

The protein belongs to the thiolase-like superfamily. Thiolase family. Heterotetramer of two alpha chains (FadJ) and two beta chains (FadI).

It localises to the cytoplasm. It carries out the reaction an acyl-CoA + acetyl-CoA = a 3-oxoacyl-CoA + CoA. It participates in lipid metabolism; fatty acid beta-oxidation. Catalyzes the final step of fatty acid oxidation in which acetyl-CoA is released and the CoA ester of a fatty acid two carbons shorter is formed. The sequence is that of 3-ketoacyl-CoA thiolase from Yersinia enterocolitica serotype O:8 / biotype 1B (strain NCTC 13174 / 8081).